The following is a 168-amino-acid chain: Photosystem I assembly protein Ycf3 (168 aa).

3 TPR repeats span residues 35 to 68, 72 to 105, and 120 to 153; these read AFTY…EIDP, SYIL…NPFL, and GEQA…TPGN.

Belongs to the Ycf3 family.

It is found in the plastid. The protein localises to the chloroplast thylakoid membrane. Its function is as follows. Essential for the assembly of the photosystem I (PSI) complex. May act as a chaperone-like factor to guide the assembly of the PSI subunits. The sequence is that of Photosystem I assembly protein Ycf3 from Solanum lycopersicum (Tomato).